The following is a 316-amino-acid chain: Acetyl-coenzyme A carboxylase carboxyl transferase subunit alpha (316 aa).

In terms of domain architecture, CoA carboxyltransferase C-terminal spans 39-293 (KLEEKNAQLT…KKHLQANLTN (255 aa)).

It belongs to the AccA family. In terms of assembly, acetyl-CoA carboxylase is a heterohexamer composed of biotin carboxyl carrier protein (AccB), biotin carboxylase (AccC) and two subunits each of ACCase subunit alpha (AccA) and ACCase subunit beta (AccD).

The protein localises to the cytoplasm. It carries out the reaction N(6)-carboxybiotinyl-L-lysyl-[protein] + acetyl-CoA = N(6)-biotinyl-L-lysyl-[protein] + malonyl-CoA. Its pathway is lipid metabolism; malonyl-CoA biosynthesis; malonyl-CoA from acetyl-CoA: step 1/1. In terms of biological role, component of the acetyl coenzyme A carboxylase (ACC) complex. First, biotin carboxylase catalyzes the carboxylation of biotin on its carrier protein (BCCP) and then the CO(2) group is transferred by the carboxyltransferase to acetyl-CoA to form malonyl-CoA. This is Acetyl-coenzyme A carboxylase carboxyl transferase subunit alpha from Coxiella burnetii (strain CbuK_Q154) (Coxiella burnetii (strain Q154)).